The primary structure comprises 124 residues: Protein ApaG (124 aa).

The ApaG domain occupies 1-124 (MSRYELTVQV…FALAMPRMLH (124 aa)).

The sequence is that of Protein ApaG from Ralstonia nicotianae (strain ATCC BAA-1114 / GMI1000) (Ralstonia solanacearum).